Consider the following 339-residue polypeptide: Anthranilate phosphoribosyltransferase (339 aa).

5-phospho-alpha-D-ribose 1-diphosphate-binding positions include glycine 81, 84-85, serine 89, 91-94, 109-117, and alanine 121; these read GD, NVSS, and KHGNRALSS. Anthranilate is bound at residue glycine 81. Serine 93 is a Mg(2+) binding site. Asparagine 112 is an anthranilate binding site. Arginine 167 contributes to the anthranilate binding site. Aspartate 225 and glutamate 226 together coordinate Mg(2+).

Belongs to the anthranilate phosphoribosyltransferase family. Homodimer. Mg(2+) serves as cofactor.

It catalyses the reaction N-(5-phospho-beta-D-ribosyl)anthranilate + diphosphate = 5-phospho-alpha-D-ribose 1-diphosphate + anthranilate. Its pathway is amino-acid biosynthesis; L-tryptophan biosynthesis; L-tryptophan from chorismate: step 2/5. In terms of biological role, catalyzes the transfer of the phosphoribosyl group of 5-phosphorylribose-1-pyrophosphate (PRPP) to anthranilate to yield N-(5'-phosphoribosyl)-anthranilate (PRA). This Brucella canis (strain ATCC 23365 / NCTC 10854 / RM-666) protein is Anthranilate phosphoribosyltransferase.